Consider the following 406-residue polypeptide: Probable tRNA sulfurtransferase (406 aa).

Residues 60–166 (DQVMNRLKLV…LNGIFLSSET (107 aa)) enclose the THUMP domain. ATP is bound by residues 184-185 (MM), 209-210 (HF), arginine 266, glycine 288, and glutamine 297.

It belongs to the ThiI family.

The protein resides in the cytoplasm. It catalyses the reaction [ThiI sulfur-carrier protein]-S-sulfanyl-L-cysteine + a uridine in tRNA + 2 reduced [2Fe-2S]-[ferredoxin] + ATP + H(+) = [ThiI sulfur-carrier protein]-L-cysteine + a 4-thiouridine in tRNA + 2 oxidized [2Fe-2S]-[ferredoxin] + AMP + diphosphate. The enzyme catalyses [ThiS sulfur-carrier protein]-C-terminal Gly-Gly-AMP + S-sulfanyl-L-cysteinyl-[cysteine desulfurase] + AH2 = [ThiS sulfur-carrier protein]-C-terminal-Gly-aminoethanethioate + L-cysteinyl-[cysteine desulfurase] + A + AMP + 2 H(+). Its pathway is cofactor biosynthesis; thiamine diphosphate biosynthesis. Catalyzes the ATP-dependent transfer of a sulfur to tRNA to produce 4-thiouridine in position 8 of tRNAs, which functions as a near-UV photosensor. Also catalyzes the transfer of sulfur to the sulfur carrier protein ThiS, forming ThiS-thiocarboxylate. This is a step in the synthesis of thiazole, in the thiamine biosynthesis pathway. The sulfur is donated as persulfide by IscS. The protein is Probable tRNA sulfurtransferase of Limosilactobacillus reuteri subsp. reuteri (strain JCM 1112) (Lactobacillus reuteri).